A 359-amino-acid chain; its full sequence is Protein RecA (359 aa).

64-71 (GHESSGKT) is an ATP binding site. The interval 328-359 (NKYPNKDSNDSPKEGSKIKTKVNPAVTQDELI) is disordered. Positions 331–344 (PNKDSNDSPKEGSK) are enriched in basic and acidic residues.

Belongs to the RecA family.

Its subcellular location is the cytoplasm. Its function is as follows. Can catalyze the hydrolysis of ATP in the presence of single-stranded DNA, the ATP-dependent uptake of single-stranded DNA by duplex DNA, and the ATP-dependent hybridization of homologous single-stranded DNAs. It interacts with LexA causing its activation and leading to its autocatalytic cleavage. The protein is Protein RecA of Francisella tularensis subsp. novicida (strain U112).